Reading from the N-terminus, the 207-residue chain is Cytochrome c biogenesis ATP-binding export protein CcmA (207 aa).

One can recognise an ABC transporter domain in the interval 4-207 (LEARELLCER…RISLTQTGAA (204 aa)). Residue 36–43 (GSNGAGKT) coordinates ATP.

It belongs to the ABC transporter superfamily. CcmA exporter (TC 3.A.1.107) family. As to quaternary structure, the complex is composed of two ATP-binding proteins (CcmA) and two transmembrane proteins (CcmB).

The protein resides in the cell inner membrane. The enzyme catalyses heme b(in) + ATP + H2O = heme b(out) + ADP + phosphate + H(+). Part of the ABC transporter complex CcmAB involved in the biogenesis of c-type cytochromes; once thought to export heme, this seems not to be the case, but its exact role is uncertain. Responsible for energy coupling to the transport system. The chain is Cytochrome c biogenesis ATP-binding export protein CcmA from Escherichia coli (strain UTI89 / UPEC).